Reading from the N-terminus, the 95-residue chain is MGSKNNSRAKILVRGKVQGVGFRYYILQRAQECRLSGYTQNLPGGEVETVVEGDKMFIEDLYRAIQRGPKGSEVKEALITWEDPKGNFRTFEIKK.

Residues Arg-8–Lys-95 enclose the Acylphosphatase-like domain. Residues Arg-23 and Asn-41 contribute to the active site.

This sequence belongs to the acylphosphatase family.

The catalysed reaction is an acyl phosphate + H2O = a carboxylate + phosphate + H(+). This chain is Acylphosphatase (acyP), found in Leptospira interrogans serogroup Icterohaemorrhagiae serovar copenhageni (strain Fiocruz L1-130).